The sequence spans 85 residues: U4-theraphotoxin-Hhn1a (85 aa).

Positions 1 to 22 (MKMTLIAILTCAAVLVLHITAA) are cleaved as a signal peptide. Positions 23 to 48 (EELEAESQLMEVGMPDTELEAVDEER) are excised as a propeptide. 3 disulfides stabilise this stretch: Cys-52-Cys-66, Cys-56-Cys-77, and Cys-71-Cys-82.

It belongs to the neurotoxin 12 (Hwtx-2) family. 02 (Hwtx-2) subfamily. Monomer. Expressed by the venom gland.

Its subcellular location is the secreted. Its function is as follows. Neurotoxin active on both insects and mammals. This Cyriopagopus hainanus (Chinese bird spider) protein is U4-theraphotoxin-Hhn1a.